Here is a 189-residue protein sequence, read N- to C-terminus: Small heat shock protein 21 (189 aa).

A disordered region spans residues 26 to 53; the sequence is PPNFNPRKIAQGDNGKGQQVSRYGAGAG. The 107-residue stretch at 77–183 folds into the sHSP domain; that stretch reads KYFVGFDDNV…HEKIVNIPIS (107 aa).

This sequence belongs to the small heat shock protein (HSP20) family.

Its function is as follows. Heat shock protein required for pathogenicity. Mediates thermotolerance and adaptation to oxidative stress and ethanol-induced stress. Required for invasive growth and filament formation under various filament inducing conditions. Plays a role in the capacity of damaging human-derived endothelial and oral epithelial cells during infection. Potentiates resistance to antifungal drugs, as well as resistance to killing by human neutrophils. Plays a major role in trehalose homeostasis in response to elevated temperatures. Regulates CEK1 activation by phosphorylation in response to elevated temperatures. This is Small heat shock protein 21 (HSP21) from Candida albicans (strain SC5314 / ATCC MYA-2876) (Yeast).